We begin with the raw amino-acid sequence, 476 residues long: Glycogen synthase (476 aa).

Lys15 provides a ligand contact to ADP-alpha-D-glucose.

This sequence belongs to the glycosyltransferase 1 family. Bacterial/plant glycogen synthase subfamily.

The catalysed reaction is [(1-&gt;4)-alpha-D-glucosyl](n) + ADP-alpha-D-glucose = [(1-&gt;4)-alpha-D-glucosyl](n+1) + ADP + H(+). It functions in the pathway glycan biosynthesis; glycogen biosynthesis. Its function is as follows. Synthesizes alpha-1,4-glucan chains using ADP-glucose. This is Glycogen synthase from Yersinia enterocolitica serotype O:8 / biotype 1B (strain NCTC 13174 / 8081).